The following is a 433-amino-acid chain: UPF0597 protein Spea_0809 (433 aa).

The protein belongs to the UPF0597 family.

This Shewanella pealeana (strain ATCC 700345 / ANG-SQ1) protein is UPF0597 protein Spea_0809.